Reading from the N-terminus, the 182-residue chain is Transcription termination/antitermination protein NusG (182 aa).

Residues 130-161 enclose the KOW domain; it reads VGEVVRVNEGPFADFNGTVEEVDYEKSRLKVS.

The protein belongs to the NusG family.

Participates in transcription elongation, termination and antitermination. The sequence is that of Transcription termination/antitermination protein NusG from Vibrio vulnificus (strain CMCP6).